A 363-amino-acid chain; its full sequence is Lovastatin nonaketide synthase, enoyl reductase component lovC (363 aa).

NADP(+) is bound by residues 51–54 (SDTK), 174–177 (STAT), 197–200 (SPHN), Tyr215, 262–263 (LN), Thr280, and 351–352 (LS). Residues 226 to 272 (TYTKNNLRYALDCITNVESTTFCFAAIGRAGGHYVSLNPFPEHAATR) form a lovB-binding region.

The protein belongs to the zinc-containing alcohol dehydrogenase family. As to quaternary structure, each MAT domain from the lovB homodimer binds one lovC molecule to form the final active lovB-lovC megasynthase complex.

The enzyme catalyses holo-[lovastatin nonaketide synthase] + 9 malonyl-CoA + S-adenosyl-L-methionine + 11 NADPH + 19 H(+) = dihydromonacolin L-[lovastatin nonaketide synthase] + S-adenosyl-L-homocysteine + 9 CO2 + 11 NADP(+) + 9 CoA + 6 H2O. It functions in the pathway polyketide biosynthesis; lovastatin biosynthesis. In terms of biological role, trans-enoyl reductase; part of the gene cluster that mediates the biosynthesis of lovastatin (also known as mevinolin, mevacor or monacolin K), a hypolipidemic inhibitor of (3S)-hydroxymethylglutaryl-coenzyme A (HMG-CoA) reductase (HMGR). The first step in the biosynthesis of lovastatin is the production of dihydromonacolin L acid (DML) by the lovastatin nonaketide synthase lovB and the trans-acting enoyl reductase lovC (called the lovB-lovC megasynthase complex) via condensation of one acetyl-CoA unit and 8 malonyl-CoA units. The formation of the LovB/C complex is essential for the integrity of the catalytic chamber to the complete total synthesis of DML acid. Dihydromonacolin L acid is released from lovB by the thioesterase lovG. Next, dihydromonacolin L acid is oxidized by the dihydromonacolin L monooxygenase lovA twice to form monacolin J acid. The 2-methylbutyrate moiety of lovastatin is synthesized by the lovastatin diketide synthase lovF via condensation of one acetyl-CoA unit and one malonyl-CoA unit. Finally, the covalent attachment of this moiety to monacolin J acid is catalyzed by the transesterase lovD to yield lovastatin. LovD has broad substrate specificity and can also convert monacolin J to simvastatin using alpha-dimethylbutanoyl-S-methyl-3-mercaptopropionate (DMB-S-MMP) as the thioester acyl donor, and can also catalyze the reverse reaction and function as hydrolase in vitro. LovD has much higher activity with LovF-bound 2-methylbutanoate than with free diketide substrates. This chain is Lovastatin nonaketide synthase, enoyl reductase component lovC, found in Aspergillus terreus.